A 1263-amino-acid polypeptide reads, in one-letter code: Multidrug resistance protein sirA (1263 aa).

The disordered stretch occupies residues 1-21 (MAEPESEKPSSAQGGGLPSSD). 4 consecutive transmembrane segments (helical) span residues 57 to 77 (LISAFFAAVSGAMFPLLILFI), 104 to 124 (IALYIVYLFLGQLVSVFIFTN), 179 to 199 (KIGLFVSACSCFVASYAIGFV), and 206 to 226 (FILTSTVVAITGVMIIMSGFM). One can recognise an ABC transmembrane type-1 1 domain in the interval 57–347 (LISAFFAAVS…VGPHLQAMSL (291 aa)). N-linked (GlcNAc...) asparagine glycosylation occurs at Asn-232. 2 helical membrane passes run 284-304 (VMGWMLAIMYGLIFLNYGLAI) and 318-338 (VGAIITVLMCLNIGAFLFGNV). The region spanning 380–625 (IEFRNVSHVY…EGLYQTFVRR (246 aa)) is the ABC transporter 1 domain. An N-linked (GlcNAc...) asparagine glycan is attached at Asn-384. 415–422 (GASGSGKS) serves as a coordination point for ATP. Asn-469 is a glycosylation site (N-linked (GlcNAc...) asparagine). A disordered region spans residues 635 to 672 (PPHARITPAVDTPASPQHRLSEKTGSIYGQGESEAADK). The next 6 membrane-spanning stretches (helical) occupy residues 699–719 (VTGIASAVISGAVWPAHSVFF), 740–760 (FWAAMYVMLAFVQIASQGVQG), 817–839 (VFLGTLFSATATVLGGLILSLAV), 843–865 (LTLVTMGTIPIIIVAGYVRLKLV), 930–950 (LSEAVPLGCMSLGFWYGATLV), and 960–980 (FFIVVTAVIFGASSAGLVFAF). Residues 699-986 (VTGIASAVIS…VFAFAPDFGK (288 aa)) form the ABC transmembrane type-1 2 domain. The region spanning 1021–1259 (VDVSNVVFYY…RGSYYDSVNL (239 aa)) is the ABC transporter 2 domain. 1056–1063 (GGSGSGKS) is an ATP binding site.

The protein belongs to the ABC transporter superfamily. ABCB family. Multidrug resistance exporter (TC 3.A.1.201) subfamily.

The protein resides in the cell membrane. The enzyme catalyses ATP + H2O + xenobioticSide 1 = ADP + phosphate + xenobioticSide 2.. Sirodesmin transporter that provides the dual role of sirodesmin export and self-protection. Also provides tolerance to gliotoxin. This chain is Multidrug resistance protein sirA, found in Leptosphaeria maculans (Blackleg fungus).